Here is a 735-residue protein sequence, read N- to C-terminus: 1,4-alpha-glucan branching enzyme GlgB (735 aa).

Asp-418 acts as the Nucleophile in catalysis. Glu-471 (proton donor) is an active-site residue.

It belongs to the glycosyl hydrolase 13 family. GlgB subfamily. As to quaternary structure, monomer.

The catalysed reaction is Transfers a segment of a (1-&gt;4)-alpha-D-glucan chain to a primary hydroxy group in a similar glucan chain.. It functions in the pathway glycan biosynthesis; glycogen biosynthesis. Catalyzes the formation of the alpha-1,6-glucosidic linkages in glycogen by scission of a 1,4-alpha-linked oligosaccharide from growing alpha-1,4-glucan chains and the subsequent attachment of the oligosaccharide to the alpha-1,6 position. This chain is 1,4-alpha-glucan branching enzyme GlgB, found in Agrobacterium fabrum (strain C58 / ATCC 33970) (Agrobacterium tumefaciens (strain C58)).